Reading from the N-terminus, the 274-residue chain is Phosphatidylglycerol--prolipoprotein diacylglyceryl transferase (274 aa).

Helical transmembrane passes span 19 to 39 (VGSV…VLGL), 59 to 79 (LAIW…VLFQ), 93 to 113 (IWRG…AALI), and 120 to 140 (VSFW…QAIG). Position 141 (R141) interacts with a 1,2-diacyl-sn-glycero-3-phospho-(1'-sn-glycerol). The next 3 helical transmembrane spans lie at 181-201 (TFLY…ALFF), 209-229 (GTIF…IEGL), and 243-263 (QVVS…LYLL).

This sequence belongs to the Lgt family.

It is found in the cell inner membrane. It catalyses the reaction L-cysteinyl-[prolipoprotein] + a 1,2-diacyl-sn-glycero-3-phospho-(1'-sn-glycerol) = an S-1,2-diacyl-sn-glyceryl-L-cysteinyl-[prolipoprotein] + sn-glycerol 1-phosphate + H(+). The protein operates within protein modification; lipoprotein biosynthesis (diacylglyceryl transfer). In terms of biological role, catalyzes the transfer of the diacylglyceryl group from phosphatidylglycerol to the sulfhydryl group of the N-terminal cysteine of a prolipoprotein, the first step in the formation of mature lipoproteins. In Acaryochloris marina (strain MBIC 11017), this protein is Phosphatidylglycerol--prolipoprotein diacylglyceryl transferase.